Here is a 295-residue protein sequence, read N- to C-terminus: (R)-phenoxypropionate/alpha-ketoglutarate-dioxygenase (295 aa).

Positions 111 and 113 each coordinate Fe cation. Positions 138 and 255 each coordinate 2-oxoglutarate. Residue His-270 coordinates Fe cation. Residue Arg-281 coordinates 2-oxoglutarate.

The protein belongs to the TfdA dioxygenase family. As to quaternary structure, homotrimer. Fe cation is required as a cofactor. Requires L-ascorbate as cofactor.

The enzyme catalyses (R)-2-(4-chloro-2-methylphenoxy)propanoate + 2-oxoglutarate + O2 = 2-methyl-4-chlorophenol + pyruvate + succinate + CO2. The catalysed reaction is (R)-(2,4-dichlorophenoxy)propanoate + 2-oxoglutarate + O2 = 2,4-dichlorophenol + pyruvate + succinate + CO2. The protein operates within xenobiotic degradation; 2-(2,4-dichlorophenoxy)propanoate degradation. With respect to regulation, inhibited by divalent cations, most significantly by copper and nickel, and by diethylpyrocarbonate (DEPC). In terms of biological role, involved in the degradation of the phenoxypropionate herbicides. Catalyzes the enantiospecific cleavage of the ether bond in the herbicid R-dichlorprop ((R)-2-(2,4-dichlorophenoxy)propionate)(R-2,4-DP) and R-mecoprop ((R)-2-(4-chloro-2-methylphenoxy)propionate)(R-2,4-MCPP). It can also accept (RS)-2-(2,4,5-trichlorophenoxy)propionate, (RS)-2-(4-chlorophenoxy)propionate, (RS)-2-(m-chlorophenoxy)propionate, however it can only accept 2-oxoglutarate as oxygen acceptor. The protein is (R)-phenoxypropionate/alpha-ketoglutarate-dioxygenase of Delftia acidovorans (Pseudomonas acidovorans).